The following is a 208-amino-acid chain: GATA transcription factor 20 (208 aa).

The GATA-type zinc finger occupies 94-119 (CASCDTTSTPLWRNGPKGPKSLCNAC).

The protein belongs to the type IV zinc-finger family. Class B subfamily.

It is found in the nucleus. In terms of biological role, transcriptional regulator that specifically binds 5'-GATA-3' or 5'-GAT-3' motifs within gene promoters. This Arabidopsis thaliana (Mouse-ear cress) protein is GATA transcription factor 20.